The following is a 126-amino-acid chain: MIKSLFAVIIGGSVGCTLRWLLSTRFNSLFPNLPPGTLVVNLLAGLIIGTALAYFLRQPHLDPFWKLMITTGLCGGLSTFSTFSVEVFALLQAGNYIWALTSVLVHVIGSLIMTALGFFIITILFA.

A run of 2 helical transmembrane segments spans residues 2 to 22 (IKSL…RWLL) and 36 to 56 (GTLV…AYFL). 2 residues coordinate Na(+): Gly-75 and Ser-78. A run of 2 helical transmembrane segments spans residues 80–100 (FSTF…IWAL) and 105–125 (VHVI…TILF).

This sequence belongs to the fluoride channel Fluc/FEX (TC 1.A.43) family. In terms of assembly, homodimer.

It localises to the cell inner membrane. The enzyme catalyses fluoride(in) = fluoride(out). With respect to regulation, na(+) is not transported, but it plays an essential structural role and its presence is essential for fluoride channel function. In terms of biological role, fluoride-specific ion channel. Important for reducing fluoride concentration in the cell, thus reducing its toxicity. Is highly specific for fluoride ions and cannot transport chloride ions. This Escherichia coli O1:K1 / APEC protein is Fluoride-specific ion channel FluC.